Here is a 606-residue protein sequence, read N- to C-terminus: Diphthine--ammonia ligase (606 aa).

This sequence in the N-terminal section; belongs to the Diphthine--ammonia ligase family. The protein in the C-terminal section; belongs to the RutC family.

The protein resides in the cytoplasm. The protein localises to the nucleus. It carries out the reaction diphthine-[translation elongation factor 2] + NH4(+) + ATP = diphthamide-[translation elongation factor 2] + AMP + diphosphate + H(+). The protein operates within protein modification; peptidyl-diphthamide biosynthesis. Its function is as follows. Amidase that catalyzes the last step of diphthamide biosynthesis using ammonium and ATP. Diphthamide biosynthesis consists in the conversion of an L-histidine residue in the translation elongation factor eEF-2 (eft201 or eft202) to diphthamide. Has a role in meiosis. This chain is Diphthine--ammonia ligase (mug71), found in Schizosaccharomyces pombe (strain 972 / ATCC 24843) (Fission yeast).